Consider the following 865-residue polypeptide: Protein translocase subunit SecA (865 aa).

ATP is bound by residues Q93, 111-115, and D501; that span reads GEGKT. Positions 841, 843, 852, and 853 each coordinate Zn(2+).

Belongs to the SecA family. In terms of assembly, monomer and homodimer. Part of the essential Sec protein translocation apparatus which comprises SecA, SecYEG and auxiliary proteins SecDF-YajC and YidC. The cofactor is Zn(2+).

The protein resides in the cell inner membrane. It is found in the cytoplasm. It catalyses the reaction ATP + H2O + cellular proteinSide 1 = ADP + phosphate + cellular proteinSide 2.. Its function is as follows. Part of the Sec protein translocase complex. Interacts with the SecYEG preprotein conducting channel. Has a central role in coupling the hydrolysis of ATP to the transfer of proteins into and across the cell membrane, serving as an ATP-driven molecular motor driving the stepwise translocation of polypeptide chains across the membrane. This Helicobacter pylori (strain HPAG1) protein is Protein translocase subunit SecA.